A 525-amino-acid chain; its full sequence is Ubiquitin carboxyl-terminal hydrolase 22 (525 aa).

Residues 21-138 (PGCSHLGSFK…KEEQRKAWKM (118 aa)) form a UBP-type zinc finger. 12 residues coordinate Zn(2+): cysteine 23, histidine 25, cysteine 63, cysteine 66, cysteine 76, cysteine 79, cysteine 84, histidine 89, histidine 93, histidine 99, cysteine 112, and cysteine 115. At lysine 129 the chain carries N6-acetyllysine. Position 147 is a phosphothreonine; by CDK1 (threonine 147). Positions 176–520 (RGLINLGNTC…EGYLLFYHKQ (345 aa)) constitute a USP domain. The active-site Nucleophile is cysteine 185. Phosphoserine; by CDK1 is present on serine 237. Residue histidine 479 is the Proton acceptor of the active site.

The protein belongs to the peptidase C19 family. UBP8 subfamily. In terms of assembly, component of some SAGA transcription coactivator-HAT complexes, at least composed of ATXN7, ATXN7L3, ENY2, GCN5L2, SUPT3H, TAF10, TRRAP and USP22. Within the SAGA complex, ATXN7L3, ENY2 and USP22 form a subcomplex required for histone deubiquitination. Interacts directly with ATXN7L3; leading to its recruitment to the SAGA complex. Interacts with ATXN7L3 and weakly with ATXN7L3B. Interacts with MED1. Phosphorylated in G2/M phase, but not in G1 phase by CDK1. In terms of processing, ubiquitinated and subsequently degraded in a CDC20-dependent manner. Moderately expressed in various tissues including heart and skeletal muscle, and weakly expressed in lung and liver.

It is found in the nucleus. It localises to the cytoplasm. It catalyses the reaction Thiol-dependent hydrolysis of ester, thioester, amide, peptide and isopeptide bonds formed by the C-terminal Gly of ubiquitin (a 76-residue protein attached to proteins as an intracellular targeting signal).. In terms of biological role, deubiquitinase that plays a role in several cellular processes including transcriptional regulation, cell cycle progression or innate immunity. As part of the transcription regulatory histone acetylation (HAT) complex SAGA, catalyzes the deubiquitination of both histones H2A and H2B, thereby acting as a transcriptional coactivator. Recruited to specific gene promoters by activators such as MYC, where it is required for transcription. Facilitates cell-cycle progression by stabilizing CCNB1 and antagonizing its proteasome-mediated degradation in a cell cycle-specific manner. Modulates cell cycle progression and apoptosis also by antagonizing TP53 transcriptional activation through deacetylase SIRT1 stabilization. Plays multiple roles in immunity and inflammation. Participates in antiviral response by deubiquitinating the importin KPNA2, leading to IRF3 nuclear translocation and subsequent type I interferon production. Acts as a central regulator of type III IFN signaling by negatively regulating STING1 activation and ubiquitination. Inhibits NLRP3 inflammasome activation by promoting NLRP3 degradation through ATG5-dependent autophagy. Deubiquitinates CD274 to induce its stabilization and thereby participates in maintenance of immune tolerance to self. Controls necroptotic cell death by regulating RIPK3 phosphorylation and ubiquitination. During bacterial infection, promotes pro-inflammatory response by targeting TRAF6 and removing its 'Lys-48'-linked polyubiquitination. The sequence is that of Ubiquitin carboxyl-terminal hydrolase 22 (USP22) from Homo sapiens (Human).